The sequence spans 324 residues: Aquaporin-4 (324 aa).

The Cytoplasmic segment spans residues 1–36; sequence MSDRPAARPWGKCGSLCRREEIMVAFKGVWTQAFWK. Residues C13 and C17 are each lipidated (S-palmitoyl cysteine). Residues 37-57 form a helical membrane-spanning segment; that stretch reads AVTAEFLAMLIFVLLSLGSTI. Over 58-69 the chain is Extracellular; the sequence is NWGGKENPLPVD. The helical transmembrane segment at 70-89 threads the bilayer; sequence MVLISLCFGLSIATMVQCFG. The Cytoplasmic portion of the chain corresponds to 90 to 93; that stretch reads HISG. Positions 94 to 101 form an intramembrane region, discontinuously helical; the sequence is GHINPAVT. The NPA 1 motif lies at 97 to 99; it reads NPA. Topologically, residues 102–115 are cytoplasmic; it reads VAMVCTRKISIAKS. S111 carries the post-translational modification Phosphoserine; by PKG. A helical transmembrane segment spans residues 116–136; the sequence is VFYIAAQCLGAIIGAGILYLV. The Extracellular portion of the chain corresponds to 137-155; that stretch reads TPPSVVGGLGVTTVHGNLT. The N-linked (GlcNAc...) asparagine glycan is linked to N153. The chain crosses the membrane as a helical span at residues 156–176; sequence AGHGLLVELIITFQLVFTIFA. Topologically, residues 177 to 184 are cytoplasmic; sequence SCDSKRTD. S180 is subject to Phosphoserine; by PKC. A helical transmembrane segment spans residues 185 to 205; it reads VTGSIALAIGFSVAIGHLFAI. The N-linked (GlcNAc...) asparagine glycan is linked to N206. At 206–208 the chain is on the extracellular side; sequence NYT. The segment at residues 209 to 222 is an intramembrane region (discontinuously helical); that stretch reads GASMNPARSFGPAV. The NPA 2 signature appears at 213-215; it reads NPA. Topologically, residues 223 to 231 are extracellular; the sequence is IMGNWENHW. A helical membrane pass occupies residues 232–252; sequence IYWVGPIIGAVLAGGLYEYVF. Topologically, residues 253–324 are cytoplasmic; the sequence is CPDVELKRRF…PSGEIAQTQH (72 aa). 2 positions are modified to phosphoserine: S276 and S285. Phosphothreonine is present on T289. Over residues 305-316 the composition is skewed to basic and acidic residues; the sequence is DRGDEKKGKDPS. Residues 305-324 are disordered; sequence DRGDEKKGKDPSGEIAQTQH.

This sequence belongs to the MIP/aquaporin (TC 1.A.8) family. Homotetramer. The tetramers can form oligomeric arrays in membranes. The size of the oligomers differs between tissues and is smaller in skeletal muscle than in brain. Interaction between AQP4 oligomeric arrays in close-by cells can contribute to cell-cell adhesion. Part of a complex containing MLC1, TRPV4, HEPACAM and ATP1B1. In terms of processing, phosphorylation by PKC at Ser-180 reduces conductance by 50%. Phosphorylation by PKG at Ser-111 in response to glutamate increases conductance by 40%. Isoform 2: Palmitoylated on its N-terminal region. Isoform 1: Not palmitoylated. Not expressed in kidney, Detectable in gastric parietal and brain astroglial cells. The absence of AQP4 in kidney may be critical for the extreme urinary concentration that occurs in this species (up to 5,000 mosmol/kg H(2)O).

The protein localises to the cell membrane. It is found in the basolateral cell membrane. It localises to the endosome membrane. Its subcellular location is the sarcolemma. The protein resides in the cell projection. The catalysed reaction is H2O(in) = H2O(out). Its function is as follows. Forms a water-specific channel. Plays an important role in brain water homeostasis and in glymphatic solute transport. Required for a normal rate of water exchange across the blood brain interface. Required for normal levels of cerebrospinal fluid influx into the brain cortex and parenchyma along paravascular spaces that surround penetrating arteries, and for normal drainage of interstitial fluid along paravenous drainage pathways. Thereby, it is required for normal clearance of solutes from the brain interstitial fluid, including soluble beta-amyloid peptides derived from APP. Plays a redundant role in urinary water homeostasis and urinary concentrating ability. In Dipodomys merriami (Merriam's kangaroo rat), this protein is Aquaporin-4 (AQP4).